A 360-amino-acid chain; its full sequence is Photosystem II protein D1 (360 aa).

Helical transmembrane passes span 29–46, 118–133, and 142–156; these read YVGWFGVIMIPTLLTATT, HFLLGVFCYLGRQWEL, and WICVAYSAPVSAATA. Position 118 (H118) interacts with chlorophyll a. Position 126 (Y126) interacts with pheophytin a. [CaMn4O5] cluster-binding residues include D170 and E189. Residues 197-218 traverse the membrane as a helical segment; it reads FHMLGVAGVFGGSLFSAMHGSL. H198 is a chlorophyll a binding site. A quinone is bound by residues H215 and 264-265; that span reads SF. H215 is a binding site for Fe cation. H272 is a Fe cation binding site. Residues 274–288 traverse the membrane as a helical segment; that stretch reads FLGAWPVIGIWFTAM. [CaMn4O5] cluster-binding residues include H332, E333, D342, and A344. Residues 345–360 constitute a propeptide that is removed on maturation; sequence SGEQAPVALTAPAING.

This sequence belongs to the reaction center PufL/M/PsbA/D family. PSII is composed of 1 copy each of membrane proteins PsbA, PsbB, PsbC, PsbD, PsbE, PsbF, PsbH, PsbI, PsbJ, PsbK, PsbL, PsbM, PsbT, PsbX, PsbY, PsbZ, Psb30/Ycf12, peripheral proteins PsbO, CyanoQ (PsbQ), PsbU, PsbV and a large number of cofactors. It forms dimeric complexes. The D1/D2 heterodimer binds P680, chlorophylls that are the primary electron donor of PSII, and subsequent electron acceptors. It shares a non-heme iron and each subunit binds pheophytin, quinone, additional chlorophylls, carotenoids and lipids. D1 provides most of the ligands for the Mn4-Ca-O5 cluster of the oxygen-evolving complex (OEC). There is also a Cl(-1) ion associated with D1 and D2, which is required for oxygen evolution. The PSII complex binds additional chlorophylls, carotenoids and specific lipids. serves as cofactor. In terms of processing, tyr-161 forms a radical intermediate that is referred to as redox-active TyrZ, YZ or Y-Z. C-terminally processed by CtpA; processing is essential to allow assembly of the oxygen-evolving complex and thus photosynthetic growth.

It localises to the cellular thylakoid membrane. It carries out the reaction 2 a plastoquinone + 4 hnu + 2 H2O = 2 a plastoquinol + O2. Functionally, photosystem II (PSII) is a light-driven water:plastoquinone oxidoreductase that uses light energy to abstract electrons from H(2)O, generating O(2) and a proton gradient subsequently used for ATP formation. It consists of a core antenna complex that captures photons, and an electron transfer chain that converts photonic excitation into a charge separation. The D1/D2 (PsbA/PsbD) reaction center heterodimer binds P680, the primary electron donor of PSII as well as several subsequent electron acceptors. The protein is Photosystem II protein D1 of Microcystis aeruginosa.